We begin with the raw amino-acid sequence, 139 residues long: ATP synthase epsilon chain (139 aa).

The protein belongs to the ATPase epsilon chain family. F-type ATPases have 2 components, CF(1) - the catalytic core - and CF(0) - the membrane proton channel. CF(1) has five subunits: alpha(3), beta(3), gamma(1), delta(1), epsilon(1). CF(0) has three main subunits: a, b and c.

The protein localises to the cell inner membrane. Produces ATP from ADP in the presence of a proton gradient across the membrane. This chain is ATP synthase epsilon chain, found in Serratia proteamaculans (strain 568).